The primary structure comprises 207 residues: Probable glutathione S-transferase 5 (207 aa).

The GST N-terminal domain maps to 2 to 81 (VSYKLTYFNG…FLAREFKLNG (80 aa)). Residues tyrosine 8, tryptophan 39, lysine 43, 51–53 (GQL), and 65–66 (QS) contribute to the glutathione site. The GST C-terminal domain occupies 83 to 207 (TAWEEAQVNS…WIETRPVTPF (125 aa)).

The protein belongs to the GST superfamily. Sigma family.

It carries out the reaction RX + glutathione = an S-substituted glutathione + a halide anion + H(+). Conjugation of reduced glutathione to a wide number of exogenous and endogenous hydrophobic electrophiles. May play a role in the detoxification of reactive oxygen species produced during pathogenic bacterial infection. This chain is Probable glutathione S-transferase 5 (gst-5), found in Caenorhabditis elegans.